Here is a 562-residue protein sequence, read N- to C-terminus: Glucocorticoid modulatory element-binding protein 1 (562 aa).

A2 carries the N-acetylalanine modification. The 85-residue stretch at A72 to D156 folds into the SAND domain. Residue C103 participates in Zn(2+) binding. DNA contacts are provided by K129, K133, K136, and R147. 3 residues coordinate Zn(2+): H160, C164, and C168. Residues L311 to V357 adopt a coiled-coil conformation. The tract at residues P360–S384 is disordered. The segment covering P375–S384 has biased composition (polar residues).

As to quaternary structure, homodimer, and heterodimer of GMEB1 and GMEB2. Interacts with the glucocorticoid receptor (NR3C1) and NCOA2/TIF2. May interact with HSP27 and CREB-binding protein (CBP). Interacts with TRIM63.

The protein resides in the nucleus. It localises to the cytoplasm. Functionally, trans-acting factor that binds to glucocorticoid modulatory elements (GME) present in the TAT (tyrosine aminotransferase) promoter and increases sensitivity to low concentrations of glucocorticoids. Also binds to the transferrin receptor promoter. In Rattus norvegicus (Rat), this protein is Glucocorticoid modulatory element-binding protein 1 (Gmeb1).